The primary structure comprises 1265 residues: Kinesin-related protein 13 (1265 aa).

Residues 23–350 (NIQAFVRVRP…LEYALKAKNI (328 aa)) form the Kinesin motor domain. 106–113 (GQTGTGKT) is an ATP binding site. Positions 331–459 (LVNLEETINT…KQQQEKQKFI (129 aa)) form a coiled coil. Disordered regions lie at residues 918–1026 (KSGE…QPLI), 1085–1119 (SLVN…LSQL), 1127–1146 (LQPQ…LNGS), 1158–1214 (LLDD…NQSL), and 1245–1265 (FGGG…TPLK). Low complexity predominate over residues 930–951 (IPSPISTSSSSSSSSSISSIHS). 3 stretches are compositionally biased toward polar residues: residues 960–980 (HQSI…SINC), 1003–1026 (LNLN…QPLI), and 1085–1097 (SLVN…SPKL). Composition is skewed to low complexity over residues 1100–1119 (QKIL…LSQL) and 1128–1146 (QPQQ…LNGS). Residues 1158 to 1169 (LLDDDSDSDNSD) show a composition bias toward acidic residues. The segment covering 1174-1195 (SLLSSNKKSSRASKNAVVSKKV) has biased composition (low complexity). Polar residues predominate over residues 1250–1265 (TISSKLKSLKQQTPLK).

The protein belongs to the TRAFAC class myosin-kinesin ATPase superfamily. Kinesin family. BimC subfamily.

Its subcellular location is the cytoplasm. It is found in the cytoskeleton. In terms of biological role, microtubule-associated force-producing protein that plays a role in organelle transport. Its motor activity is directed toward the microtubule's plus end. Cooperates with dynein to control the spindle elongation rate, but is dispensable for mitosis. In Dictyostelium discoideum (Social amoeba), this protein is Kinesin-related protein 13 (kif13).